The sequence spans 354 residues: MGKLVALVLLGVGLSLVGEMFLAFRERVNASREVEPVEPENCHLIEELESGSEDIDILPSGLAFISSGLKYPGMPNFAPDEPGKIFLMDLNEQNPRAQALEISGGFDKELFNPHGISIFIDKDNTVYLYVVNHPHMKSTVEIFKFEEQQRSLVYLKTIKHELLKSVNDIVVLGPEQFYATRDHYFTNSLLSFFEMILDLRWTYVLFYSPREVKVVAKGFCSANGITVSADQKYVYVADVAAKNIHIMEKHDNWDLTQLKVIQLGTLVDNLTVDPATGDILAGCHPNPMKLLNYNPEDPPGSEVLRIQNVLSEKPRVSTVYANNGSVLQGTSVASVYHGKILIGTVFHKTLYCEL.

An N-linked (GlcNAc...) asparagine glycan is attached at asparagine 29. Cysteine 42 and cysteine 352 are oxidised to a cystine. Ca(2+) is bound by residues glutamate 53 and aspartate 54. Residue histidine 114 is the Proton acceptor of the active site. Residue isoleucine 116 participates in Ca(2+) binding. Phosphoserine is present on serine 165. Residues asparagine 167, aspartate 168, asparagine 223, aspartate 268, and asparagine 269 each coordinate Ca(2+). N-linked (GlcNAc...) asparagine glycosylation is found at asparagine 269 and asparagine 323.

This sequence belongs to the paraoxonase family. As to quaternary structure, homodimer. Ca(2+) is required as a cofactor. Post-translationally, the signal sequence is not cleaved.

The protein resides in the secreted. It is found in the extracellular space. The catalysed reaction is a phenyl acetate + H2O = a phenol + acetate + H(+). It catalyses the reaction An aryl dialkyl phosphate + H2O = dialkyl phosphate + an aryl alcohol.. It carries out the reaction an N-acyl-L-homoserine lactone + H2O = an N-acyl-L-homoserine + H(+). Functionally, has low activity towards the organophosphate paraxon and aromatic carboxylic acid esters. Rapidly hydrolyzes lactones such as statin prodrugs (e.g. lovastatin). Hydrolyzes aromatic lactones and 5- or 6-member ring lactones with aliphatic substituents but not simple lactones or those with polar substituents. In Homo sapiens (Human), this protein is Serum paraoxonase/lactonase 3 (PON3).